Reading from the N-terminus, the 160-residue chain is Heme transporter hrg-5 (160 aa).

A helical membrane pass occupies residues 21–41; it reads IALTILDILIGFSNILSYAIQ. Asn44 carries N-linked (GlcNAc...) asparagine glycosylation. Transmembrane regions (helical) follow at residues 47–67, 89–109, and 123–142; these read ALTLTAMVTLVACHTLQMFLA, ITLGFLALGCFVVCFIIAGVT, and FTGLWATAITKYTWQNALLA. The N-linked (GlcNAc...) asparagine glycan is linked to Asn144.

Belongs to the HRG family.

It localises to the membrane. Functionally, heme transporter. This chain is Heme transporter hrg-5 (hrg-5), found in Caenorhabditis elegans.